We begin with the raw amino-acid sequence, 321 residues long: Biotin synthase (321 aa).

Residues Arg37 to Arg264 form the Radical SAM core domain. [4Fe-4S] cluster is bound by residues Cys52, Cys56, and Cys59. 4 residues coordinate [2Fe-2S] cluster: Cys96, Cys127, Cys187, and Arg259.

It belongs to the radical SAM superfamily. Biotin synthase family. Homodimer. [4Fe-4S] cluster serves as cofactor. The cofactor is [2Fe-2S] cluster.

It catalyses the reaction (4R,5S)-dethiobiotin + (sulfur carrier)-SH + 2 reduced [2Fe-2S]-[ferredoxin] + 2 S-adenosyl-L-methionine = (sulfur carrier)-H + biotin + 2 5'-deoxyadenosine + 2 L-methionine + 2 oxidized [2Fe-2S]-[ferredoxin]. Its pathway is cofactor biosynthesis; biotin biosynthesis; biotin from 7,8-diaminononanoate: step 2/2. Catalyzes the conversion of dethiobiotin (DTB) to biotin by the insertion of a sulfur atom into dethiobiotin via a radical-based mechanism. This chain is Biotin synthase, found in Coxiella burnetii (strain CbuK_Q154) (Coxiella burnetii (strain Q154)).